The following is a 257-amino-acid chain: Geranylgeranylglyceryl phosphate synthase (257 aa).

Residues aspartate 27 and threonine 57 each contribute to the Mg(2+) site. Residues 175 to 181, 207 to 208, and 229 to 230 each bind sn-glycerol 1-phosphate; these read YLEAGSG, GG, and GN.

The protein belongs to the GGGP/HepGP synthase family. Group II subfamily. Requires Mg(2+) as cofactor.

The protein localises to the cytoplasm. The enzyme catalyses sn-glycerol 1-phosphate + (2E,6E,10E)-geranylgeranyl diphosphate = sn-3-O-(geranylgeranyl)glycerol 1-phosphate + diphosphate. It functions in the pathway membrane lipid metabolism; glycerophospholipid metabolism. Its function is as follows. Prenyltransferase that catalyzes the transfer of the geranylgeranyl moiety of geranylgeranyl diphosphate (GGPP) to the C3 hydroxyl of sn-glycerol-1-phosphate (G1P). This reaction is the first ether-bond-formation step in the biosynthesis of archaeal membrane lipids. The protein is Geranylgeranylglyceryl phosphate synthase of Sulfolobus acidocaldarius (strain ATCC 33909 / DSM 639 / JCM 8929 / NBRC 15157 / NCIMB 11770).